Reading from the N-terminus, the 468-residue chain is 3-isopropylmalate dehydratase large subunit (468 aa).

Residues Cys347, Cys407, and Cys410 each coordinate [4Fe-4S] cluster.

It belongs to the aconitase/IPM isomerase family. LeuC type 1 subfamily. In terms of assembly, heterodimer of LeuC and LeuD. [4Fe-4S] cluster serves as cofactor.

The enzyme catalyses (2R,3S)-3-isopropylmalate = (2S)-2-isopropylmalate. It functions in the pathway amino-acid biosynthesis; L-leucine biosynthesis; L-leucine from 3-methyl-2-oxobutanoate: step 2/4. In terms of biological role, catalyzes the isomerization between 2-isopropylmalate and 3-isopropylmalate, via the formation of 2-isopropylmaleate. This is 3-isopropylmalate dehydratase large subunit from Campylobacter jejuni subsp. jejuni serotype O:6 (strain 81116 / NCTC 11828).